The chain runs to 807 residues: Glycerol-3-phosphate acyltransferase (807 aa).

The short motif at 308-313 is the HXXXXD motif element; sequence CHRSHM.

It belongs to the GPAT/DAPAT family.

Its subcellular location is the cell inner membrane. The enzyme catalyses sn-glycerol 3-phosphate + an acyl-CoA = a 1-acyl-sn-glycero-3-phosphate + CoA. It participates in phospholipid metabolism; CDP-diacylglycerol biosynthesis; CDP-diacylglycerol from sn-glycerol 3-phosphate: step 1/3. This chain is Glycerol-3-phosphate acyltransferase, found in Shewanella pealeana (strain ATCC 700345 / ANG-SQ1).